A 227-amino-acid polypeptide reads, in one-letter code: Glutathione S-transferase U13 (227 aa).

One can recognise a GST N-terminal domain in the interval 5–86; the sequence is DTVKLIGSWS…YVDEAWPSVP (82 aa). Glutathione is bound by residues 15 to 16, 43 to 44, 57 to 58, and 70 to 71; these read SP, EK, KV, and ES. The GST C-terminal domain maps to 92–224; the sequence is DAYDRASARF…EVVAFAKQKF (133 aa). Phosphothreonine is present on Thr158.

The protein belongs to the GST superfamily. Tau family.

Its subcellular location is the cytoplasm. It localises to the cytosol. The catalysed reaction is RX + glutathione = an S-substituted glutathione + a halide anion + H(+). Its function is as follows. In vitro, possesses glutathione S-transferase activity toward 1-chloro-2,4-dinitrobenzene (CDNB) and benzyl isothiocyanate (BITC). May be involved in the conjugation of reduced glutathione to a wide number of exogenous and endogenous hydrophobic electrophiles and have a detoxification role against certain herbicides. This is Glutathione S-transferase U13 (GSTU13) from Arabidopsis thaliana (Mouse-ear cress).